A 434-amino-acid chain; its full sequence is Tol-Pal system protein TolB (434 aa).

Positions 1–21 are cleaved as a signal peptide; sequence MIVRRALALAALALAASPALA. The interval 411 to 434 is disordered; sequence GDRQTPVTSGKTDLAAPAWGPLAP.

Belongs to the TolB family. In terms of assembly, the Tol-Pal system is composed of five core proteins: the inner membrane proteins TolA, TolQ and TolR, the periplasmic protein TolB and the outer membrane protein Pal. They form a network linking the inner and outer membranes and the peptidoglycan layer.

Its subcellular location is the periplasm. In terms of biological role, part of the Tol-Pal system, which plays a role in outer membrane invagination during cell division and is important for maintaining outer membrane integrity. This is Tol-Pal system protein TolB from Anaeromyxobacter sp. (strain K).